We begin with the raw amino-acid sequence, 388 residues long: Ferrochelatase (388 aa).

Fe cation-binding residues include His196 and Glu277.

It belongs to the ferrochelatase family.

The protein resides in the cytoplasm. It catalyses the reaction heme b + 2 H(+) = protoporphyrin IX + Fe(2+). It participates in porphyrin-containing compound metabolism; protoheme biosynthesis; protoheme from protoporphyrin-IX: step 1/1. Functionally, catalyzes the ferrous insertion into protoporphyrin IX. The sequence is that of Ferrochelatase from Nostoc punctiforme (strain ATCC 29133 / PCC 73102).